The primary structure comprises 502 residues: Galactose/methyl galactoside import ATP-binding protein MglA (502 aa).

ABC transporter domains are found at residues 10 to 245 (LEMT…VGRE) and 255 to 502 (NEPK…SRYL). 42–49 (GENGAGKS) contacts ATP.

This sequence belongs to the ABC transporter superfamily. Galactose/methyl galactoside importer (TC 3.A.1.2.3) family. The complex is composed of one ATP-binding protein (MglA), two transmembrane proteins (MglC) and a solute-binding protein (MglB).

It localises to the cell inner membrane. The catalysed reaction is D-galactose(out) + ATP + H2O = D-galactose(in) + ADP + phosphate + H(+). The enzyme catalyses methyl beta-D-galactoside(out) + ATP + H2O = methyl beta-D-galactoside(in) + ADP + phosphate + H(+). Part of the ABC transporter complex MglABC involved in galactose/methyl galactoside import. Responsible for energy coupling to the transport system. The polypeptide is Galactose/methyl galactoside import ATP-binding protein MglA (Vibrio cholerae serotype O1 (strain ATCC 39315 / El Tor Inaba N16961)).